Reading from the N-terminus, the 288-residue chain is Nucleotide-binding protein Pcar_1935 (288 aa).

11–18 lines the ATP pocket; sequence GLSGSGKT. Residue 62-65 participates in GTP binding; the sequence is DVRN.

Belongs to the RapZ-like family.

In terms of biological role, displays ATPase and GTPase activities. This is Nucleotide-binding protein Pcar_1935 from Syntrophotalea carbinolica (strain DSM 2380 / NBRC 103641 / GraBd1) (Pelobacter carbinolicus).